Reading from the N-terminus, the 78-residue chain is Putative membrane protein insertion efficiency factor (78 aa).

The protein belongs to the UPF0161 family.

The protein resides in the cell inner membrane. Its function is as follows. Could be involved in insertion of integral membrane proteins into the membrane. This chain is Putative membrane protein insertion efficiency factor, found in Prochlorococcus marinus (strain MIT 9312).